A 124-amino-acid polypeptide reads, in one-letter code: Histone H2A (124 aa).

Residues 1–18 (MSGRGKGGKVKGKAKSRS) are compositionally biased toward basic residues. The disordered stretch occupies residues 1–21 (MSGRGKGGKVKGKAKSRSNRA). At S2 the chain carries N-acetylserine. S2 bears the Phosphoserine mark. An N6-succinyllysine modification is found at K36. Q104 is modified (N5-methylglutamine). A Glycyl lysine isopeptide (Lys-Gly) (interchain with G-Cter in ubiquitin) cross-link involves residue K119. At T120 the chain carries Phosphothreonine.

It belongs to the histone H2A family. In terms of assembly, the nucleosome is a histone octamer containing two molecules each of H2A, H2B, H3 and H4 assembled in one H3-H4 heterotetramer and two H2A-H2B heterodimers. The octamer wraps approximately 147 bp of DNA. Post-translationally, the chromatin-associated form, but not the free cytoplasmic form, is phosphorylated on Thr-120 by NHK-1 during mitosis, and dephosphorylated during S-phase. Also phosphorylated on Thr-120 by NHK-1 during prophase I of meiosis; which is required for acetylation of H3 'Lys-14' and H4 'Lys-5', diassembly of the synaptonemal complex, and karyosome formation. Monoubiquitination of Lys-119 by sce/dRING gives a specific tag for epigenetic transcriptional repression. In terms of processing, phosphorylation on Ser-2 is enhanced during mitosis. Phosphorylation on Ser-2 directly represses transcription.

The protein localises to the nucleus. Its subcellular location is the chromosome. In terms of biological role, core component of nucleosome. Nucleosomes wrap and compact DNA into chromatin, limiting DNA accessibility to the cellular machineries which require DNA as a template. Histones thereby play a central role in transcription regulation, DNA repair, DNA replication and chromosomal stability. DNA accessibility is regulated via a complex set of post-translational modifications of histones, also called histone code, and nucleosome remodeling. The chain is Histone H2A (His2A) from Drosophila erecta (Fruit fly).